Consider the following 396-residue polypeptide: Ornithine aminotransferase (396 aa).

K255 carries the N6-(pyridoxal phosphate)lysine modification.

It belongs to the class-III pyridoxal-phosphate-dependent aminotransferase family. OAT subfamily. It depends on pyridoxal 5'-phosphate as a cofactor.

It is found in the cytoplasm. It catalyses the reaction a 2-oxocarboxylate + L-ornithine = L-glutamate 5-semialdehyde + an L-alpha-amino acid. It participates in amino-acid biosynthesis; L-proline biosynthesis; L-glutamate 5-semialdehyde from L-ornithine: step 1/1. In terms of biological role, catalyzes the interconversion of ornithine to glutamate semialdehyde. In Staphylococcus carnosus (strain TM300), this protein is Ornithine aminotransferase.